The sequence spans 493 residues: Cysteine sulfinic acid decarboxylase (493 aa).

The residue at position 305 (Lys-305) is an N6-(pyridoxal phosphate)lysine.

This sequence belongs to the group II decarboxylase family. In terms of assembly, homodimer. Requires pyridoxal 5'-phosphate as cofactor. As to expression, expressed in brain, liver and kidney.

The catalysed reaction is L-aspartate + H(+) = beta-alanine + CO2. It catalyses the reaction 3-sulfino-L-alanine + H(+) = hypotaurine + CO2. It carries out the reaction L-cysteate + H(+) = taurine + CO2. It functions in the pathway organosulfur biosynthesis; taurine biosynthesis; hypotaurine from L-cysteine: step 2/2. In terms of biological role, catalyzes the decarboxylation of L-aspartate, 3-sulfino-L-alanine (cysteine sulfinic acid), and L-cysteate to beta-alanine, hypotaurine and taurine, respectively. The preferred substrate is 3-sulfino-L-alanine. Does not exhibit any decarboxylation activity toward glutamate. The chain is Cysteine sulfinic acid decarboxylase (Csad) from Rattus norvegicus (Rat).